A 66-amino-acid polypeptide reads, in one-letter code: uncharacterized protein (66 aa).

A run of 2 helical transmembrane segments spans residues 3 to 23 (LIHV…PFAN) and 34 to 54 (FILA…AIVY).

It is found in the cell membrane. This is an uncharacterized protein from Bacillus subtilis (strain 168).